A 187-amino-acid polypeptide reads, in one-letter code: Elongation factor P (187 aa).

Belongs to the elongation factor P family.

It is found in the cytoplasm. The protein operates within protein biosynthesis; polypeptide chain elongation. Functionally, involved in peptide bond synthesis. Stimulates efficient translation and peptide-bond synthesis on native or reconstituted 70S ribosomes in vitro. Probably functions indirectly by altering the affinity of the ribosome for aminoacyl-tRNA, thus increasing their reactivity as acceptors for peptidyl transferase. The protein is Elongation factor P of Synechococcus sp. (strain CC9605).